The chain runs to 87 residues: NADH dehydrogenase [ubiquinone] 1 alpha subcomplex subunit 4-like 2 (87 aa).

It belongs to the complex I NDUFA4 subunit family.

The protein is NADH dehydrogenase [ubiquinone] 1 alpha subcomplex subunit 4-like 2 (NDUFA4L2) of Bos taurus (Bovine).